The chain runs to 395 residues: Chorismate synthase (395 aa).

The protein belongs to the chorismate synthase family. Homotetramer. FMNH2 is required as a cofactor.

The enzyme catalyses 5-O-(1-carboxyvinyl)-3-phosphoshikimate = chorismate + phosphate. Its pathway is metabolic intermediate biosynthesis; chorismate biosynthesis; chorismate from D-erythrose 4-phosphate and phosphoenolpyruvate: step 7/7. This Schizosaccharomyces pombe (strain 972 / ATCC 24843) (Fission yeast) protein is Chorismate synthase.